Consider the following 281-residue polypeptide: MAQKIVRVGDIQIGNDLPFVLFGGMNVLESRDLAMQVCEEYVRVTEKLGIPYVFKASFDKANRSSIHSFRGPGLEEGMKIFEEIKKTFKVPVITDVHEPFQAQPVAEVCDIIQLPAFLSRQTDLVVAMARTNAVINIKKAQFLAPQEMKHILTKCEEAGNDRLILCERGSSFGYNNLVVDMLGFGIMKQFEYPVFFDVTHALQMPGGRADSAGGRRAQVTDLAKAGLSQKLAGLFLEAHPDPEHAKCDGPCALRLNKLEAFLSQLKQLDELIKSFPAIETA.

It belongs to the KdsA family.

It localises to the cytoplasm. It carries out the reaction D-arabinose 5-phosphate + phosphoenolpyruvate + H2O = 3-deoxy-alpha-D-manno-2-octulosonate-8-phosphate + phosphate. The protein operates within carbohydrate biosynthesis; 3-deoxy-D-manno-octulosonate biosynthesis; 3-deoxy-D-manno-octulosonate from D-ribulose 5-phosphate: step 2/3. Its pathway is bacterial outer membrane biogenesis; lipopolysaccharide biosynthesis. The chain is 2-dehydro-3-deoxyphosphooctonate aldolase from Pseudomonas aeruginosa (strain UCBPP-PA14).